Here is a 472-residue protein sequence, read N- to C-terminus: Protein hedgehog (472 aa).

The N-palmitoyl cysteine moiety is linked to residue C84. E149, D154, E185, D188, and D190 together coordinate Ca(2+). The Cholesterol glycine ester moiety is linked to residue G256.

It belongs to the hedgehog family. Interacts with shf. In terms of processing, the C-terminal part of the hedgehog protein precursor displays an autoproteolysis activity that results in the cleavage of the full-length protein into two parts (N-product and C-product). In addition, the C-terminal part displays a cholesterol transferase activity that results by the covalent attachment of a cholesterol moiety to the C-terminal of the newly generated N-product. The N-product is the active species in both local and long-range signaling, whereas the C-product has no signaling activity. Post-translationally, cholesterylation is required for N-product targeting to lipid rafts and multimerization. N-palmitoylation by Rasp of the hedgehog N-product, within the secretory pathway, is required for the embryonic and larval patterning activities of the hedgehog signal.

Its subcellular location is the nucleus. The protein localises to the cytoplasm. The protein resides in the cell membrane. The catalysed reaction is glycyl-L-cysteinyl-[protein] + cholesterol + H(+) = [protein]-C-terminal glycyl cholesterol ester + N-terminal L-cysteinyl-[protein]. Its function is as follows. The C-terminal part of the hedgehog protein precursor displays an autoproteolysis activity that results in the cleavage of the full-length protein into two parts (N-product and C-product). In addition, the C-terminal part displays a cholesterol transferase activity that results by the covalent attachment of a cholesterol moiety to the C-terminal of the newly generated N-product. Once cleaved, the C-product has no signaling activity and diffuses from the cell. Functionally, the dually lipidated hedgehog protein N-product is a morphogen which is essential for a variety of patterning events during development. Establishes the anterior-posterior axis of the embryonic segments and patterns the larval imaginal disks. Binds to the patched (ptc) receptor, which functions in association with smoothened (smo), to activate the transcription of target genes wingless (wg), decapentaplegic (dpp) and ptc. In the absence of hh, ptc represses the constitutive signaling activity of smo through fused (fu). Essential component of a signaling pathway which regulates the Duox-dependent gut immune response to bacterial uracil; required to activate Cad99C-dependent endosome formation, norpA-dependent Ca2+ mobilization and p38 MAPK, which are essential steps in the Duox-dependent production of reactive oxygen species (ROS) in response to intestinal bacterial infection. During photoreceptor differentiation, it up-regulates transcription of Ubr3, which in turn promotes the hh-signaling pathway by mediating the ubiquitination and degradation of cos. The polypeptide is Protein hedgehog (Drosophila ananassae (Fruit fly)).